Reading from the N-terminus, the 184-residue chain is MKNVTDSFVSLGHWPSAGSFGFNTDILATNPINLSVVLGVLIFFGKGVLSDLLDNRKQRILNTIRNSEELREGAIEQLEKARSRLRKVETEAEQFRVNGYSEIEREKLNLINSTYKTLEQLENYKNETIQFEQQRAINQVRQRVFQQALRGALGTLNSCLNNELHLRTISANIGMLGTMKEITD.

A helical transmembrane segment spans residues 27–49 (LATNPINLSVVLGVLIFFGKGVL).

It belongs to the ATPase B chain family. F-type ATPases have 2 components, F(1) - the catalytic core - and F(0) - the membrane proton channel. F(1) has five subunits: alpha(3), beta(3), gamma(1), delta(1), epsilon(1). F(0) has four main subunits: a(1), b(1), b'(1) and c(10-14). The alpha and beta chains form an alternating ring which encloses part of the gamma chain. F(1) is attached to F(0) by a central stalk formed by the gamma and epsilon chains, while a peripheral stalk is formed by the delta, b and b' chains.

The protein localises to the plastid. The protein resides in the chloroplast thylakoid membrane. Functionally, f(1)F(0) ATP synthase produces ATP from ADP in the presence of a proton or sodium gradient. F-type ATPases consist of two structural domains, F(1) containing the extramembraneous catalytic core and F(0) containing the membrane proton channel, linked together by a central stalk and a peripheral stalk. During catalysis, ATP synthesis in the catalytic domain of F(1) is coupled via a rotary mechanism of the central stalk subunits to proton translocation. Component of the F(0) channel, it forms part of the peripheral stalk, linking F(1) to F(0). In Atropa belladonna (Belladonna), this protein is ATP synthase subunit b, chloroplastic.